Consider the following 312-residue polypeptide: Erlin (312 aa).

Residues 1-3 (MLT) lie on the Cytoplasmic side of the membrane. Residues 4–24 (ELALGLFALWIAIFSQALHKI) form a helical membrane-spanning segment. Residues 25-312 (EEGHVGVYYR…FVMGTTQQTV (288 aa)) are Lumenal-facing. N-linked (GlcNAc...) asparagine glycosylation occurs at Asn-104.

It belongs to the band 7/mec-2 family. As to quaternary structure, seems to form a multimeric complex. Expressed in the germline only.

The protein resides in the endoplasmic reticulum membrane. The sequence is that of Erlin from Caenorhabditis elegans.